Consider the following 852-residue polypeptide: Protein Shroom1 (852 aa).

An N-acetylmethionine modification is found at Met1. Ser18 is subject to Phosphoserine. Disordered regions lie at residues 34 to 54, 81 to 109, and 125 to 218; these read SSFS…GTDL, TSPR…PLNR, and AAQA…ANQQ. Thr103 is subject to Phosphothreonine. Low complexity predominate over residues 125 to 144; that stretch reads AAQAAEPPSPPASRAAYRQR. Phosphoserine is present on residues Ser133 and Ser137. The ASD1 domain maps to 145–233; sequence LQGAQRRVLR…SEPGKLDRVG (89 aa). Positions 152 to 164 are enriched in basic and acidic residues; sequence VLRETSFQRKELR. Phosphoserine is present on residues Ser166, Ser190, and Ser224. Disordered regions lie at residues 276 to 320, 399 to 431, 464 to 496, and 823 to 852; these read LPET…GSGG, MRSP…QRTG, SRPT…TAAE, and DLGH…LLLT. The segment covering 279–289 has biased composition (polar residues); that stretch reads TQPQGSMNLDS. The span at 301–313 shows a compositional bias: low complexity; the sequence is ASRSRSASGEVLG. Residues 465–479 are compositionally biased toward polar residues; the sequence is RPTSHTPTGTANDNI. The 283-residue stretch at 543 to 825 folds into the ASD2 domain; it reads EELVQELARL…QLDAIRDDLG (283 aa). Positions 830–852 are enriched in pro residues; the sequence is SPSPARPPGTCPPVQPPFPLLLT.

Belongs to the shroom family. In terms of assembly, interacts with F-actin.

The protein localises to the cytoplasm. Its subcellular location is the cytoskeleton. Functionally, may be involved in the assembly of microtubule arrays during cell elongation. This chain is Protein Shroom1 (SHROOM1), found in Homo sapiens (Human).